The sequence spans 367 residues: Phosphoribosylaminoimidazole-succinocarboxamide synthase (367 aa).

Belongs to the SAICAR synthetase family.

It catalyses the reaction 5-amino-1-(5-phospho-D-ribosyl)imidazole-4-carboxylate + L-aspartate + ATP = (2S)-2-[5-amino-1-(5-phospho-beta-D-ribosyl)imidazole-4-carboxamido]succinate + ADP + phosphate + 2 H(+). It functions in the pathway purine metabolism; IMP biosynthesis via de novo pathway; 5-amino-1-(5-phospho-D-ribosyl)imidazole-4-carboxamide from 5-amino-1-(5-phospho-D-ribosyl)imidazole-4-carboxylate: step 1/2. This chain is Phosphoribosylaminoimidazole-succinocarboxamide synthase, found in Vibrio vulnificus (strain CMCP6).